Reading from the N-terminus, the 185-residue chain is Large ribosomal subunit protein uL5 (185 aa).

The protein belongs to the universal ribosomal protein uL5 family. Part of the 50S ribosomal subunit; part of the 5S rRNA/L5/L18/L25 subcomplex. Contacts the 5S rRNA and the P site tRNA. Forms a bridge to the 30S subunit in the 70S ribosome.

This is one of the proteins that bind and probably mediate the attachment of the 5S RNA into the large ribosomal subunit, where it forms part of the central protuberance. In the 70S ribosome it contacts protein S13 of the 30S subunit (bridge B1b), connecting the 2 subunits; this bridge is implicated in subunit movement. Contacts the P site tRNA; the 5S rRNA and some of its associated proteins might help stabilize positioning of ribosome-bound tRNAs. The polypeptide is Large ribosomal subunit protein uL5 (Sinorhizobium medicae (strain WSM419) (Ensifer medicae)).